The sequence spans 404 residues: Propionate kinase PduW (404 aa).

It belongs to the acetokinase family. PduW subfamily.

It localises to the cytoplasm. The catalysed reaction is propanoate + ATP = propanoyl phosphate + ADP. It functions in the pathway polyol metabolism; 1,2-propanediol degradation. It participates in organic acid metabolism; propanoate degradation. In terms of biological role, works with phosphate acetyltransferase (pta) to capture exogenous propionate and regenerate propionyl-CoA during degradation of propionate and 1,2-propanediol (1,2-PD). Ectopic expression partially complements a cobB deletion allowing some growth on propionate. Restores growth to an eutQ deletion on ethanolamine and tetrathionate under anoxic conditions. The sequence is that of Propionate kinase PduW from Salmonella typhimurium (strain LT2 / SGSC1412 / ATCC 700720).